A 564-amino-acid polypeptide reads, in one-letter code: Arginine--tRNA ligase (564 aa).

The 'HIGH' region motif lies at 130-140 (ANPTGSLHIGH).

The protein belongs to the class-I aminoacyl-tRNA synthetase family. As to quaternary structure, monomer.

The protein resides in the cytoplasm. The catalysed reaction is tRNA(Arg) + L-arginine + ATP = L-arginyl-tRNA(Arg) + AMP + diphosphate. This Malacoplasma penetrans (strain HF-2) (Mycoplasma penetrans) protein is Arginine--tRNA ligase.